We begin with the raw amino-acid sequence, 117 residues long: MSMDHLVRIIEKKYEKKEIPDFRPGDTVRVHVKVIEGDRERTQVFEGIVIAKRGSGINRTFTVRRIGSHGVGVERIFPFHSPVVEKIEVVRKGKVRRAKLYYLRDVKGKIRIKERRD.

This sequence belongs to the bacterial ribosomal protein bL19 family.

This protein is located at the 30S-50S ribosomal subunit interface and may play a role in the structure and function of the aminoacyl-tRNA binding site. The sequence is that of Large ribosomal subunit protein bL19 from Thermotoga neapolitana (strain ATCC 49049 / DSM 4359 / NBRC 107923 / NS-E).